Reading from the N-terminus, the 292-residue chain is AKT-interacting protein (292 aa).

Residues 1–64 (MNPFWNMSSA…ISPSPSVQPT (64 aa)) form a disordered region. Positions 14 to 23 (KRSDNDEKIA) are enriched in basic and acidic residues. The region spanning 75-223 (YLEYSLLAEF…VVDSVKLCNS (149 aa)) is the UBC core domain. The interval 273 to 292 (SWVKPGSVLPFSKEENSLQT) is disordered.

Belongs to the ubiquitin-conjugating enzyme family. FTS subfamily.

Its subcellular location is the cytoplasm. It is found in the cell membrane. In terms of biological role, may function to promote vesicle trafficking and/or fusion. May also regulate apoptosis. The chain is AKT-interacting protein (aktip) from Xenopus tropicalis (Western clawed frog).